Here is a 445-residue protein sequence, read N- to C-terminus: Probable glycine dehydrogenase (decarboxylating) subunit 1 (445 aa).

The protein belongs to the GcvP family. N-terminal subunit subfamily. As to quaternary structure, the glycine cleavage system is composed of four proteins: P, T, L and H. In this organism, the P 'protein' is a heterodimer of two subunits.

It catalyses the reaction N(6)-[(R)-lipoyl]-L-lysyl-[glycine-cleavage complex H protein] + glycine + H(+) = N(6)-[(R)-S(8)-aminomethyldihydrolipoyl]-L-lysyl-[glycine-cleavage complex H protein] + CO2. The glycine cleavage system catalyzes the degradation of glycine. The P protein binds the alpha-amino group of glycine through its pyridoxal phosphate cofactor; CO(2) is released and the remaining methylamine moiety is then transferred to the lipoamide cofactor of the H protein. The polypeptide is Probable glycine dehydrogenase (decarboxylating) subunit 1 (Chlorobium chlorochromatii (strain CaD3)).